The following is a 338-amino-acid chain: Ketol-acid reductoisomerase (NADP(+)) (338 aa).

Residues 1–181 (MKVYYDKDAD…GGGKAGIIET (181 aa)) enclose the KARI N-terminal Rossmann domain. Residues 24 to 27 (YGSQ), Arg-47, and Ser-52 contribute to the NADP(+) site. His-107 is a catalytic residue. Gly-133 lines the NADP(+) pocket. Residues 182 to 327 (NFREETETDL…EKLRAMMPWI (146 aa)) form the KARI C-terminal knotted domain. 4 residues coordinate Mg(2+): Asp-190, Glu-194, Glu-226, and Glu-230. Ser-251 lines the substrate pocket.

This sequence belongs to the ketol-acid reductoisomerase family. The cofactor is Mg(2+).

The catalysed reaction is (2R)-2,3-dihydroxy-3-methylbutanoate + NADP(+) = (2S)-2-acetolactate + NADPH + H(+). The enzyme catalyses (2R,3R)-2,3-dihydroxy-3-methylpentanoate + NADP(+) = (S)-2-ethyl-2-hydroxy-3-oxobutanoate + NADPH + H(+). It participates in amino-acid biosynthesis; L-isoleucine biosynthesis; L-isoleucine from 2-oxobutanoate: step 2/4. The protein operates within amino-acid biosynthesis; L-valine biosynthesis; L-valine from pyruvate: step 2/4. Functionally, involved in the biosynthesis of branched-chain amino acids (BCAA). Catalyzes an alkyl-migration followed by a ketol-acid reduction of (S)-2-acetolactate (S2AL) to yield (R)-2,3-dihydroxy-isovalerate. In the isomerase reaction, S2AL is rearranged via a Mg-dependent methyl migration to produce 3-hydroxy-3-methyl-2-ketobutyrate (HMKB). In the reductase reaction, this 2-ketoacid undergoes a metal-dependent reduction by NADPH to yield (R)-2,3-dihydroxy-isovalerate. In Variovorax paradoxus (strain S110), this protein is Ketol-acid reductoisomerase (NADP(+)).